A 529-amino-acid polypeptide reads, in one-letter code: MTDRIPLKRALISVSDKTGLVDFARALSARGVEILSTGGTAKTLREAGLSVVDVADVTGFPEMMDGRVKTLHPVVHGGLLALRDNDEHMAAAKSHRIGMIDLLVVNLYPFEATVAKGAAYDDCIENIDIGGPAMIRAAAKNHAFVTVVVDVQDYAAVLAELDANDDRTGLAFRQRQAQIAYARTAAYDAAVSTWMAGAIGEETPRRRSFSGQLAQSLRYGENPHQSAAFYRDGSDRPGVATARQWQGKELSYNNINDTDAAFELVAEFDPAEGPAVAIIKHANPCGVARGDSAVDAYLRAFDCDRTSAFGGIIALNTTLDGETAQAITEIFTEVVIAPDATDEAKEIFAAKKNLRLLTTGGLPDPAAPGLAFRQVAGGFLVQGRDNGRILRADLKVVTKRQPTDQELADLLFAWTVAKHVKSNAIVYARDLATVGIGAGQMSRVDSTRIGKRKSEDMAEALGLAQALTIGSSVASDAFFPFADGVEALAAAGARAVIQPGGSMRDAEVIEAADRLGLAMVFTGQRHFRH.

One can recognise an MGS-like domain in the interval 3–149; that stretch reads DRIPLKRALI…KNHAFVTVVV (147 aa).

Belongs to the PurH family.

It carries out the reaction (6R)-10-formyltetrahydrofolate + 5-amino-1-(5-phospho-beta-D-ribosyl)imidazole-4-carboxamide = 5-formamido-1-(5-phospho-D-ribosyl)imidazole-4-carboxamide + (6S)-5,6,7,8-tetrahydrofolate. The catalysed reaction is IMP + H2O = 5-formamido-1-(5-phospho-D-ribosyl)imidazole-4-carboxamide. It functions in the pathway purine metabolism; IMP biosynthesis via de novo pathway; 5-formamido-1-(5-phospho-D-ribosyl)imidazole-4-carboxamide from 5-amino-1-(5-phospho-D-ribosyl)imidazole-4-carboxamide (10-formyl THF route): step 1/1. Its pathway is purine metabolism; IMP biosynthesis via de novo pathway; IMP from 5-formamido-1-(5-phospho-D-ribosyl)imidazole-4-carboxamide: step 1/1. The chain is Bifunctional purine biosynthesis protein PurH from Paracoccus denitrificans (strain Pd 1222).